Reading from the N-terminus, the 181-residue chain is ATP synthase subunit delta (181 aa).

The protein belongs to the ATPase delta chain family. In terms of assembly, F-type ATPases have 2 components, F(1) - the catalytic core - and F(0) - the membrane proton channel. F(1) has five subunits: alpha(3), beta(3), gamma(1), delta(1), epsilon(1). F(0) has three main subunits: a(1), b(2) and c(10-14). The alpha and beta chains form an alternating ring which encloses part of the gamma chain. F(1) is attached to F(0) by a central stalk formed by the gamma and epsilon chains, while a peripheral stalk is formed by the delta and b chains.

Its subcellular location is the cell membrane. F(1)F(0) ATP synthase produces ATP from ADP in the presence of a proton or sodium gradient. F-type ATPases consist of two structural domains, F(1) containing the extramembraneous catalytic core and F(0) containing the membrane proton channel, linked together by a central stalk and a peripheral stalk. During catalysis, ATP synthesis in the catalytic domain of F(1) is coupled via a rotary mechanism of the central stalk subunits to proton translocation. Its function is as follows. This protein is part of the stalk that links CF(0) to CF(1). It either transmits conformational changes from CF(0) to CF(1) or is implicated in proton conduction. The chain is ATP synthase subunit delta from Priestia megaterium (strain ATCC 12872 / QMB1551) (Bacillus megaterium).